A 269-amino-acid chain; its full sequence is 3-methyl-2-oxobutanoate hydroxymethyltransferase (269 aa).

Mg(2+) contacts are provided by Asp50 and Asp89. 3-methyl-2-oxobutanoate is bound by residues 50-51 (DS), Asp89, and Lys118. Glu120 contacts Mg(2+). Glu187 functions as the Proton acceptor in the catalytic mechanism.

This sequence belongs to the PanB family. Homodecamer; pentamer of dimers. Mg(2+) is required as a cofactor.

The protein localises to the cytoplasm. It catalyses the reaction 3-methyl-2-oxobutanoate + (6R)-5,10-methylene-5,6,7,8-tetrahydrofolate + H2O = 2-dehydropantoate + (6S)-5,6,7,8-tetrahydrofolate. Its pathway is cofactor biosynthesis; (R)-pantothenate biosynthesis; (R)-pantoate from 3-methyl-2-oxobutanoate: step 1/2. In terms of biological role, catalyzes the reversible reaction in which hydroxymethyl group from 5,10-methylenetetrahydrofolate is transferred onto alpha-ketoisovalerate to form ketopantoate. This chain is 3-methyl-2-oxobutanoate hydroxymethyltransferase, found in Nitrosomonas eutropha (strain DSM 101675 / C91 / Nm57).